We begin with the raw amino-acid sequence, 284 residues long: Putative cysteine-rich repeat secretory protein 7 (284 aa).

Residues 1–24 (MARIILTAPLFYFFFSLLSHQTMS) form the signal peptide. Gnk2-homologous domains lie at 26-128 (PQHM…NVSF) and 134-244 (SKPV…TFVL). Residues 247-284 (PAPSPSSLPPISPTSSPPLSLPPQLPPPLSQPPPPLST) form a disordered region.

This sequence belongs to the cysteine-rich repeat secretory protein family.

It is found in the secreted. The chain is Putative cysteine-rich repeat secretory protein 7 (CRRSP7) from Arabidopsis thaliana (Mouse-ear cress).